The chain runs to 382 residues: Queuine tRNA-ribosyltransferase (382 aa).

Residue aspartate 96 is the Proton acceptor of the active site. Residues aspartate 96 to phenylalanine 100, aspartate 151, glutamine 194, and glycine 221 each bind substrate. Positions glycine 252 to serine 258 are RNA binding. The active-site Nucleophile is aspartate 271. Residues threonine 276–arginine 280 are RNA binding; important for wobble base 34 recognition. Zn(2+) contacts are provided by cysteine 309, cysteine 311, cysteine 314, and histidine 340.

It belongs to the queuine tRNA-ribosyltransferase family. As to quaternary structure, homodimer. Within each dimer, one monomer is responsible for RNA recognition and catalysis, while the other monomer binds to the replacement base PreQ1. Requires Zn(2+) as cofactor.

The enzyme catalyses 7-aminomethyl-7-carbaguanine + guanosine(34) in tRNA = 7-aminomethyl-7-carbaguanosine(34) in tRNA + guanine. The protein operates within tRNA modification; tRNA-queuosine biosynthesis. Catalyzes the base-exchange of a guanine (G) residue with the queuine precursor 7-aminomethyl-7-deazaguanine (PreQ1) at position 34 (anticodon wobble position) in tRNAs with GU(N) anticodons (tRNA-Asp, -Asn, -His and -Tyr). Catalysis occurs through a double-displacement mechanism. The nucleophile active site attacks the C1' of nucleotide 34 to detach the guanine base from the RNA, forming a covalent enzyme-RNA intermediate. The proton acceptor active site deprotonates the incoming PreQ1, allowing a nucleophilic attack on the C1' of the ribose to form the product. After dissociation, two additional enzymatic reactions on the tRNA convert PreQ1 to queuine (Q), resulting in the hypermodified nucleoside queuosine (7-(((4,5-cis-dihydroxy-2-cyclopenten-1-yl)amino)methyl)-7-deazaguanosine). In Lactococcus lactis subsp. lactis (strain IL1403) (Streptococcus lactis), this protein is Queuine tRNA-ribosyltransferase.